Here is a 134-residue protein sequence, read N- to C-terminus: Protein PsiE homolog (134 aa).

The next 4 helical transmembrane spans lie at 14 to 34, 56 to 76, 82 to 102, and 106 to 126; these read LQWILNIALIILSIVLSIFLI, VESIIVYFLYFEFIALIIKYF, FPLRYFIYIGITALIRLIIVS, and PMETLLYAGAILVLVIALYIS.

The protein belongs to the PsiE family.

Its subcellular location is the cell membrane. The chain is Protein PsiE homolog from Bacillus anthracis.